The chain runs to 586 residues: CTP synthase (586 aa).

The amidoligase domain stretch occupies residues 1–265; that stretch reads MVRFIFVTGG…ENKVLNFFNI (265 aa). Serine 13 lines the CTP pocket. UTP is bound at residue serine 13. ATP-binding positions include 14–19 and aspartate 71; that span reads SLGKGI. Positions 71 and 139 each coordinate Mg(2+). CTP-binding positions include 146–148, 186–191, and lysine 222; these read DIE and KTKPTQ. Residues 186 to 191 and lysine 222 contribute to the UTP site; that span reads KTKPTQ. In terms of domain architecture, Glutamine amidotransferase type-1 spans 290–582; that stretch reads KIAIITKYHK…IKATIEYNKS (293 aa). Residue glycine 352 coordinates L-glutamine. Cysteine 379 functions as the Nucleophile; for glutamine hydrolysis in the catalytic mechanism. Residues 380-383 and glutamate 403 contribute to the L-glutamine site; that span reads FGMQ. The region spanning 429 to 473 is the RPE1 insert domain; that stretch reads AHISKCTYSEAFECDASTVYTNIHEDSNNLSTDKLQIETNFRNMS. Arginine 510 contacts L-glutamine. Active-site residues include histidine 555 and glutamate 557.

Belongs to the CTP synthase family. In terms of assembly, homotetramer.

The enzyme catalyses UTP + L-glutamine + ATP + H2O = CTP + L-glutamate + ADP + phosphate + 2 H(+). It catalyses the reaction L-glutamine + H2O = L-glutamate + NH4(+). The catalysed reaction is UTP + NH4(+) + ATP = CTP + ADP + phosphate + 2 H(+). It participates in pyrimidine metabolism; CTP biosynthesis via de novo pathway; CTP from UDP: step 2/2. Its activity is regulated as follows. Allosterically activated by GTP, when glutamine is the substrate; GTP has no effect on the reaction when ammonia is the substrate. The allosteric effector GTP functions by stabilizing the protein conformation that binds the tetrahedral intermediate(s) formed during glutamine hydrolysis. Inhibited by the product CTP, via allosteric rather than competitive inhibition. Catalyzes the ATP-dependent amination of UTP to CTP with either L-glutamine or ammonia as the source of nitrogen. Regulates intracellular CTP levels through interactions with the four ribonucleotide triphosphates. This chain is CTP synthase, found in Rickettsia prowazekii (strain Madrid E).